Reading from the N-terminus, the 46-residue chain is Large ribosomal subunit protein bL33A (46 aa).

It belongs to the bacterial ribosomal protein bL33 family.

The chain is Large ribosomal subunit protein bL33A from Mesomycoplasma hyopneumoniae (strain 7448) (Mycoplasma hyopneumoniae).